A 486-amino-acid chain; its full sequence is ATP synthase subunit beta, chloroplastic (486 aa).

Position 154–161 (154–161) interacts with ATP; the sequence is GGAGVGKT.

This sequence belongs to the ATPase alpha/beta chains family. In terms of assembly, F-type ATPases have 2 components, CF(1) - the catalytic core - and CF(0) - the membrane proton channel. CF(1) has five subunits: alpha(3), beta(3), gamma(1), delta(1), epsilon(1). CF(0) has four main subunits: a(1), b(1), b'(1) and c(9-12).

Its subcellular location is the plastid. It is found in the chloroplast thylakoid membrane. It catalyses the reaction ATP + H2O + 4 H(+)(in) = ADP + phosphate + 5 H(+)(out). Functionally, produces ATP from ADP in the presence of a proton gradient across the membrane. The catalytic sites are hosted primarily by the beta subunits. The chain is ATP synthase subunit beta, chloroplastic from Dennstaedtia punctilobula (Hay-scented fern).